The chain runs to 363 residues: Spermidine/putrescine import ATP-binding protein PotA (363 aa).

Residues 9–239 (IDVRNAVKRY…PANRFVADFI (231 aa)) enclose the ABC transporter domain. 41-48 (GPSGCGKT) contributes to the ATP binding site.

Belongs to the ABC transporter superfamily. Spermidine/putrescine importer (TC 3.A.1.11.1) family. The complex is composed of two ATP-binding proteins (PotA), two transmembrane proteins (PotB and PotC) and a solute-binding protein (PotD).

The protein localises to the cell inner membrane. The catalysed reaction is ATP + H2O + polyamine-[polyamine-binding protein]Side 1 = ADP + phosphate + polyamineSide 2 + [polyamine-binding protein]Side 1.. In terms of biological role, part of the ABC transporter complex PotABCD involved in spermidine/putrescine import. Responsible for energy coupling to the transport system. The protein is Spermidine/putrescine import ATP-binding protein PotA of Roseobacter denitrificans (strain ATCC 33942 / OCh 114) (Erythrobacter sp. (strain OCh 114)).